The chain runs to 268 residues: Esterase GME11355 (268 aa).

Residues Ser-122, Asp-212, and His-240 each act as charge relay system in the active site.

The protein belongs to the LovG family.

Its pathway is secondary metabolite biosynthesis. Esterase; part of the gene cluster that mediates the biosynthesis of dibenzodioxocinones such as pestalotiollide B, a novel class of inhibitors against cholesterol ester transfer protein (CEPT). The biosynthesis initiates from condensation of acetate and malonate units catalyzed by the non-reducing PKS pks8/GME11356. Pks8/GME11356 lacks a thioesterase (TE) domain, which is important to the cyclizing of the third ring of atrochrysone carboxylic acid, and the esterase GME11355 might play the role of TE and catalyzes the cyclization reaction of the C ring. The lactamase-like protein GME11357 (or other beta-lactamases in Pestalotiopsis microspora) probably hydrolyzes the thioester bond between the ACP of pks8/GME11356 and the intermediate to release atrochrysone carboxylic acid, which is spontaneously dehydrates to form endocrocin anthrone. Endocrocin anthrone is further converted to emodin via the endocrocin intermediate. Emodin is then oxidized by several enzymes such as the Baeyer-Villiger oxidase GME11358, the oxidoreductase GME11367, the short chain dehydrogenase/reductase GME11373, as well as by other oxidoreductases from the cluster, to modify the A and C rings and open the B ring, and finally yield monodictyphenone. The prenyltransferase GME11375 may catalyze the addition reaction between the C5 side chains and the carbon bone of dibenzodioxocinones. The remaining biochemical reactions to the final product dibenzodioxocinones should be methylation catalyzed by methyltransferase GME11366 and reduction and lactonization reaction catalyzed by a series of oxidordeuctases. In Pestalotiopsis microspora, this protein is Esterase GME11355.